The primary structure comprises 205 residues: Cytochrome c oxidase subunit 3 (205 aa).

A run of 5 helical transmembrane segments spans residues 29 to 49 (TIVFLSQELMFFAGLFAMYFV), 73 to 93 (LAITVILVSSSVTCQFGVFAA), 104 to 124 (WFLITIILGSIFVIGQAYEYF), 144 to 164 (ITTGFHAAHVIAGVIAFVVVL), and 184 to 204 (SYYWHFVDVVWIGLFITIYFI).

This sequence belongs to the cytochrome c oxidase subunit 3 family. In terms of assembly, associates with subunits I, II and IV to form cytochrome c oxidase.

Its subcellular location is the cell membrane. It carries out the reaction 4 Fe(II)-[cytochrome c] + O2 + 8 H(+)(in) = 4 Fe(III)-[cytochrome c] + 2 H2O + 4 H(+)(out). This chain is Cytochrome c oxidase subunit 3 (ctaE), found in Corynebacterium efficiens (strain DSM 44549 / YS-314 / AJ 12310 / JCM 11189 / NBRC 100395).